The following is a 263-amino-acid chain: Endonuclease NucS (263 aa).

Belongs to the NucS endonuclease family.

It localises to the cytoplasm. Functionally, cleaves both 3' and 5' ssDNA extremities of branched DNA structures. The chain is Endonuclease NucS from Methanocaldococcus jannaschii (strain ATCC 43067 / DSM 2661 / JAL-1 / JCM 10045 / NBRC 100440) (Methanococcus jannaschii).